The sequence spans 95 residues: Putative pterin-4-alpha-carbinolamine dehydratase (95 aa).

The protein belongs to the pterin-4-alpha-carbinolamine dehydratase family.

The enzyme catalyses (4aS,6R)-4a-hydroxy-L-erythro-5,6,7,8-tetrahydrobiopterin = (6R)-L-erythro-6,7-dihydrobiopterin + H2O. This chain is Putative pterin-4-alpha-carbinolamine dehydratase, found in Thermosynechococcus vestitus (strain NIES-2133 / IAM M-273 / BP-1).